Here is a 164-residue protein sequence, read N- to C-terminus: Crossover junction endodeoxyribonuclease RuvC (164 aa).

Catalysis depends on residues Asp-7, Glu-66, and Asp-138. 3 residues coordinate Mg(2+): Asp-7, Glu-66, and Asp-138.

It belongs to the RuvC family. In terms of assembly, homodimer which binds Holliday junction (HJ) DNA. The HJ becomes 2-fold symmetrical on binding to RuvC with unstacked arms; it has a different conformation from HJ DNA in complex with RuvA. In the full resolvosome a probable DNA-RuvA(4)-RuvB(12)-RuvC(2) complex forms which resolves the HJ. Requires Mg(2+) as cofactor.

The protein resides in the cytoplasm. The catalysed reaction is Endonucleolytic cleavage at a junction such as a reciprocal single-stranded crossover between two homologous DNA duplexes (Holliday junction).. The RuvA-RuvB-RuvC complex processes Holliday junction (HJ) DNA during genetic recombination and DNA repair. Endonuclease that resolves HJ intermediates. Cleaves cruciform DNA by making single-stranded nicks across the HJ at symmetrical positions within the homologous arms, yielding a 5'-phosphate and a 3'-hydroxyl group; requires a central core of homology in the junction. The consensus cleavage sequence is 5'-(A/T)TT(C/G)-3'. Cleavage occurs on the 3'-side of the TT dinucleotide at the point of strand exchange. HJ branch migration catalyzed by RuvA-RuvB allows RuvC to scan DNA until it finds its consensus sequence, where it cleaves and resolves the cruciform DNA. This chain is Crossover junction endodeoxyribonuclease RuvC, found in Paracoccus denitrificans (strain Pd 1222).